Reading from the N-terminus, the 443-residue chain is MFLAQEIIRKKRNGEVLSTQEIQFFVQGITNNTVSEGQIAALGMAVYFKDMNMDERIALTTAMRDSGTVLNWKNLGLDGPIIDKHSTGGVGDVISLMLGPMAAACGGYVPMISGRGLGHTGGTLDKFDAIPGYQTEPDSDLFRKVVKEAGVAIIGQTGDLVPADKRFYSIRDNTATVESISLITASILSKKLAAGLDALAMDVKVGSGAFMPTYEASEELARSITAVANGAGTKTTALLTDMNQVLASCAGNAVEVKEAVDFLTGAYRNPRLYEVTMGLCAEMLQLGGLAASEADAREKLNRVLDNGKAADIFGRMIAGLGGPADFIENYAKYLPQSQIIRPVYADRSGFAASMDTRELGLAVVTLGGGRRKPGDALDYSVGLTQVCALGDEITSDKPIAMVHAQSESAFEEAAAAVKKAIHIGDEAPEKTPEIYRYIRQSDL.

It belongs to the thymidine/pyrimidine-nucleoside phosphorylase family. In terms of assembly, homodimer.

The catalysed reaction is thymidine + phosphate = 2-deoxy-alpha-D-ribose 1-phosphate + thymine. It participates in pyrimidine metabolism; dTMP biosynthesis via salvage pathway; dTMP from thymine: step 1/2. The enzymes which catalyze the reversible phosphorolysis of pyrimidine nucleosides are involved in the degradation of these compounds and in their utilization as carbon and energy sources, or in the rescue of pyrimidine bases for nucleotide synthesis. This chain is Thymidine phosphorylase, found in Shewanella loihica (strain ATCC BAA-1088 / PV-4).